The primary structure comprises 448 residues: Na(+)-translocating NADH-quinone reductase subunit A (448 aa).

It belongs to the NqrA family. Composed of six subunits; NqrA, NqrB, NqrC, NqrD, NqrE and NqrF.

It catalyses the reaction a ubiquinone + n Na(+)(in) + NADH + H(+) = a ubiquinol + n Na(+)(out) + NAD(+). Its function is as follows. NQR complex catalyzes the reduction of ubiquinone-1 to ubiquinol by two successive reactions, coupled with the transport of Na(+) ions from the cytoplasm to the periplasm. NqrA to NqrE are probably involved in the second step, the conversion of ubisemiquinone to ubiquinol. The sequence is that of Na(+)-translocating NADH-quinone reductase subunit A from Alcanivorax borkumensis (strain ATCC 700651 / DSM 11573 / NCIMB 13689 / SK2).